Reading from the N-terminus, the 1254-residue chain is MFPYQPMYPMQPMPFRNPFAAPRRPWFPRTDPFLAMQVQELARSMANLTFKQRRDVPPEGPPAKKKKKDTSQQGGRNQNGKKKNKLVKKKKKTGPPPQKTNGGKKKVNKKPGKRQRMVMKLESDKTFPIMLDGRINGYACVVGGKLFRPLHVEGKIDNDVLSSLKTKKASKYDLEYADVPQSMRADTFKYTHEKPQGYYSWHHGAVQYENGRFTVPKGVGAKGDSGRPILDNQGRVVAIVLGGVNEGSRTALSVVTWNEKGVTVKYTPENSEQWSLVTTMCLLANVTFPCSQPPICYDRKPAETLSMLSHNIDNPGYDELLEAVLKCPGRGKRSTEELFKEYKLTRPYMARCIRCAVGSCHSPIAIEAVRSEGHDGYVRLQTSSQYGLDPSGNLKGRTMRYDMHGTIEEIPLHQVSLHTSRPCHIIDGHGYFLLARCPAGDSITMEFKKESVTHSCSVPYEVKFNPVGRELYTHPPEHGAEQPCHVYAHDAQNRGAYVEMHLPGSEVDSTLLSTSGSSVHVTPPAGQSVLVECECGGTKISETINSAKQYSQCSKTAQCRAYRTQNDKWVYNSDKLPKAAGETLKGKLHVPFVLTEAKCTVPLAPEPIITFGFRSVSLKLHPKNPTFLTTRQLDGEPAYTHELITNPVVRNFSVTEKGWEFVWGNHPPQRYWSQETAPGNPHGLPHEVITHYYHRYPMSTILGLSICAAIVTTSIAASVWLFCKSRISCLTPYRLTPNARMPLCLAVLCCARTARAETTWESLDHLWNHNQQMFWSQLLIPLAALIVATRLLKCVCCVVPFLVVAGAVGAGAYEHATTMPNQVGIPYNTIVNRAGYAPLPISIVPTKVKLIPTVNLEYITCHYKTGMDSPAIKCCGTQECSPTYRPDEQCKVFSGVYPFMWGGAYCFCDTENTQISKAYVTKSEDCVTDHAQAYKAHTASVQAFLNITVGGHSTTAVVYVNGETPVNFNGVKLTAGPLSTAWSPFDKKIVQYAGEIYNYDFPEYGAGHAGAFGDIQARTISSSDVYANTNLVLQRPKAGAIHVPYTQAPSGYEQWKKDKPPSLKFTAPFGCEIYTNPIRAENCAVGSIPLAFDIPDALFTRVSETPTLSTAECTLNECVYSSDFGGIATVKYSASKSGKCAVHVPSGTATLKEAAVELAEQGSATIHFSTASIHPEFRLQICTSYVTCKGDCHPPKDHIVTHPQYHAQSFTAAVSKTAWTWLTSLLGGSAIIIIIGLVLATIVAMYVLTNQKHN.

Residues 1-33 (MFPYQPMYPMQPMPFRNPFAAPRRPWFPRTDPF) form a necessary for nucleocapsid assembly and virus assembly region. Residues 33–68 (FLAMQVQELARSMANLTFKQRRDVPPEGPPAKKKKK) form a host transcription inhibition region. A Supraphysiological nuclear export signal motif is present at residues 41 to 48 (LARSMANL). Residues 48–119 (LTFKQRRDVP…KPGKRQRMVM (72 aa)) are disordered. The Nuclear localization signal signature appears at 64–68 (KKKKK). Composition is skewed to basic residues over residues 79–93 (NGKK…KKKT) and 102–117 (GGKK…RQRM). Positions 91-126 (KKTGPPPQKTNGGKKKVNKKPGKRQRMVMKLESDKT) are binding to the viral RNA. The residue at position 93 (T93) is a Phosphothreonine. The ribosome-binding stretch occupies residues 111-125 (PGKRQRMVMKLESDK). S123 is subject to Phosphoserine. A Peptidase S3 domain is found at 125–274 (KTFPIMLDGR…KYTPENSEQW (150 aa)). T126 carries the post-translational modification Phosphothreonine. The active-site Charge relay system is H151. Positions 167 to 172 (KKASKY) are interaction with spike glycoprotein E2. Active-site charge relay system residues include D173 and S225. Residues 259–263 (EKGVT) are interaction with spike glycoprotein E2. The segment at 275 to 286 (SLVTTMCLLANV) is functions as an uncleaved signal peptide for the precursor of protein E3/E2. Residues 275 to 700 (SLVTTMCLLA…HYYHRYPMST (426 aa)) are Extracellular-facing. Cystine bridges form between C281/C290, C352/C456, C355/C360, C423/C437, C484/C599, C533/C559, and C535/C553. The N-linked (GlcNAc...) asparagine; by host glycan is linked to N285. N651 carries an N-linked (GlcNAc...) asparagine; by host glycan. Residues 701 to 721 (ILGLSICAAIVTTSIAASVWL) traverse the membrane as a helical segment. Topologically, residues 722–756 (FCKSRISCLTPYRLTPNARMPLCLAVLCCARTARA) are cytoplasmic. The segment at 724–728 (KSRIS) is interaction with the capsid protein. S-palmitoyl cysteine; by host attachment occurs at residues C729, C749, and C750. A transient transmembrane before p62-6K protein processing region spans residues 729 to 749 (CLTPYRLTPNARMPLCLAVLC). An intrachain disulfide couples C729 to C750. Over 757 to 771 (ETTWESLDHLWNHNQ) the chain is Extracellular. The next 2 membrane-spanning stretches (helical) occupy residues 772-790 (QMFW…VATR) and 791-811 (LLKC…VGAG). The Extracellular portion of the chain corresponds to 812 to 1224 (AYEHATTMPN…SKTAWTWLTS (413 aa)). 4 disulfides stabilise this stretch: C861–C926, C874–C906, C875–C908, and C880–C890. Residues 896 to 913 (VYPFMWGGAYCFCDTENT) are E1 fusion peptide loop. N946 and N1082 each carry an N-linked (GlcNAc...) asparagine; by host glycan. Cystine bridges form between C1071–C1083, C1113–C1188, C1118–C1192, and C1140–C1182. Residues 1225–1245 (LLGGSAIIIIIGLVLATIVAM) form a helical membrane-spanning segment. At 1246-1254 (YVLTNQKHN) the chain is on the cytoplasmic side.

In terms of assembly, homodimer. Homomultimer. Interacts with host karyopherin KPNA4; this interaction allows the nuclear import of the viral capsid protein. Interacts with spike glycoprotein E2. Interacts with host IRAK1; the interaction leads to inhibition of IRAK1-dependent signaling. Part of a tetrameric complex composed of host CRM1, host importin alpha/beta dimer and the viral capsid; this complex blocks the receptor-mediated transport through the nuclear pore. Interacts with host phosphatase PPP1CA; this interaction dephosphorylates the capsid protein, which increases its ability to bind to the viral genome. The precursor of protein E3/E2 and E1 form a heterodimer shortly after synthesis. As to quaternary structure, interacts with spike glycoprotein E2. The precursor of protein E3/E2 and E1 form a heterodimer shortly after synthesis. Processing of the precursor of protein E3/E2 into E2 and E3 results in a heterodimer of the spike glycoproteins E2 and E1. Spike at virion surface are constituted of three E2-E1 heterodimers. After target cell attachment and endocytosis, E1 change conformation to form homotrimers. Interacts with 6K protein. Interacts with host LDLRAD3; this interaction mediates viral entry to the host cell. In terms of assembly, interacts with spike glycoprotein E1. Processing of the precursor of protein E3/E2 into E2 and E3 results in a heterodimer of the spike glycoproteins E2 and E1. Spike at virion surface are constituted of a trimer of E2-E1 heterodimers. Interacts with 6K protein. Interacts with host LDLRAD3; this interaction mediates viral entry to the host cell. Oligomer. Interacts with spike glycoprotein E1. Interacts with spike glycoprotein E2. Structural polyprotein: Specific enzymatic cleavages in vivo yield mature proteins. Capsid protein is auto-cleaved during polyprotein translation, unmasking a signal peptide at the N-terminus of the precursor of E3/E2. The remaining polyprotein is then targeted to the host endoplasmic reticulum, where host signal peptidase cleaves it into pE2, 6K and E1 proteins. pE2 is further processed to mature E3 and E2 by host furin in trans-Golgi vesicle. Post-translationally, phosphorylated on serine and threonine residues. In terms of processing, palmitoylated via thioester bonds. These palmitoylations may induce disruption of the C-terminus transmembrane. This would result in the reorientation of E2 C-terminus from lumenal to cytoplasmic side. N-glycosylated. Post-translationally, palmitoylated via thioester bonds.

Its subcellular location is the virion. It localises to the host cytoplasm. The protein localises to the host cell membrane. The protein resides in the host nucleus. It is found in the virion membrane. Its subcellular location is the host Golgi apparatus. It localises to the host trans-Golgi network. The protein localises to the host endoplasmic reticulum. It catalyses the reaction Autocatalytic release of the core protein from the N-terminus of the togavirus structural polyprotein by hydrolysis of a -Trp-|-Ser- bond.. Forms an icosahedral capsid with a T=4 symmetry composed of 240 copies of the capsid protein surrounded by a lipid membrane through which penetrate 80 spikes composed of trimers of E1-E2 heterodimers. The capsid protein binds to the viral RNA genome at a site adjacent to a ribosome binding site for viral genome translation following genome release. Possesses a protease activity that results in its autocatalytic cleavage from the nascent structural protein. Following its self-cleavage, the capsid protein transiently associates with ribosomes, and within several minutes the protein binds to viral RNA and rapidly assembles into icosahedric core particles. The resulting nucleocapsid eventually associates with the cytoplasmic domain of the spike glycoprotein E2 at the cell membrane, leading to budding and formation of mature virions. In case of infection, new virions attach to target cells and after clathrin-mediated endocytosis their membrane fuses with the host endosomal membrane. This leads to the release of the nucleocapsid into the cytoplasm, followed by an uncoating event necessary for the genomic RNA to become accessible. The uncoating might be triggered by the interaction of capsid proteins with ribosomes. Binding of ribosomes would release the genomic RNA since the same region is genomic RNA-binding and ribosome-binding. Specifically inhibits interleukin-1 receptor-associated kinase 1/IRAK1-dependent signaling during viral entry, representing a means by which the alphaviruses may evade innate immune detection and activation prior to viral gene expression. Inhibits host transcription. Forms a tetrameric complex with XPO1/CRM1 and the nuclear import receptor importin. This complex blocks the central channel of host nuclear pores thereby inhibiting the receptor-mediated nuclear transport and thus the host mRNA and rRNA transcription. The inhibition of transcription is linked to a cytopathic effect on the host cell. Functionally, provides the signal sequence for the translocation of the precursor of protein E3/E2 to the host endoplasmic reticulum. Furin-cleaved E3 remains associated with spike glycoprotein E1 and mediates pH protection of the latter during the transport via the secretory pathway. After virion release from the host cell, the assembly protein E3 is gradually released in the extracellular space. In terms of biological role, plays a role in viral attachment to target host cell, by binding to the cell receptor LDLRAD3. Synthesized as a p62 precursor which is processed by furin at the cell membrane just before virion budding, giving rise to E2-E1 heterodimer. The p62-E1 heterodimer is stable, whereas E2-E1 is unstable and dissociate at low pH. p62 is processed at the last step, presumably to avoid E1 fusion activation before its final export to cell surface. E2 C-terminus contains a transitory transmembrane that would be disrupted by palmitoylation, resulting in reorientation of the C-terminal tail from lumenal to cytoplasmic side. This step is critical since E2 C-terminus is involved in budding by interacting with capsid proteins. This release of E2 C-terminus in cytoplasm occurs lately in protein export, and precludes premature assembly of particles at the endoplasmic reticulum membrane. Its function is as follows. Acts as a viroporin that participates in virus glycoprotein processing and transport to the plasma membrane, cell permeabilization and budding of viral particles. Disrupts the calcium homeostasis of the cell, probably at the endoplasmic reticulum level. This leads to cytoplasmic calcium elevation. Because of its lipophilic properties, the 6K protein is postulated to influence the selection of lipids that interact with the transmembrane domains of the glycoproteins, which, in turn, affects the deformability of the bilayer required for the extreme curvature that occurs as budding proceeds. Present in low amount in virions, about 3% compared to viral glycoproteins. Class II viral fusion protein. Fusion activity is inactive as long as E1 is bound to E2 in mature virion. After virus attachment to cell receptor LDLRAD3 and endocytosis, acidification of the endosome induce dissociation of E1/E2 heterodimer and concomitant trimerization of the E1 subunits. This E1 trimer is fusion active, and promotes release of viral nucleocapsid in cytoplasm after endosome and viral membrane fusion. Efficient fusion requires the presence of cholesterol and sphingolipid in the target membrane. This chain is Structural polyprotein, found in Venezuelan equine encephalitis virus (strain Mena II) (VEEV).